We begin with the raw amino-acid sequence, 316 residues long: UPF0324 membrane protein SO_4708 (316 aa).

The next 9 membrane-spanning stretches (helical) occupy residues 61–80 (LLSYSIIGLGFGINLTAAIE), 85–107 (NLGLIIGSIIFTLILGFIVTRAL), 114–136 (GHLIASGTAICGGSAIAAVAPAV), 146–168 (ALACVFVLNSVALFLFPALGHLL), 175–197 (FGVWSAIAIHDTSSVVGAASAYG), 207–226 (IKLARALWIIPIALVSALIF), 233–252 (LNLPYFIGFYCLAIAIAHWL), 262–281 (LFMVSKHTLVLCLFLIGAGI), and 293–315 (PLLLGVILWMAIGVTSLAYILYF).

Belongs to the UPF0324 family.

The protein resides in the cell membrane. This Shewanella oneidensis (strain ATCC 700550 / JCM 31522 / CIP 106686 / LMG 19005 / NCIMB 14063 / MR-1) protein is UPF0324 membrane protein SO_4708.